A 169-amino-acid polypeptide reads, in one-letter code: Crossover junction endodeoxyribonuclease RuvC (169 aa).

Active-site residues include aspartate 13, glutamate 73, and aspartate 145. Positions 13, 73, and 145 each coordinate Mg(2+).

Belongs to the RuvC family. In terms of assembly, homodimer which binds Holliday junction (HJ) DNA. The HJ becomes 2-fold symmetrical on binding to RuvC with unstacked arms; it has a different conformation from HJ DNA in complex with RuvA. In the full resolvosome a probable DNA-RuvA(4)-RuvB(12)-RuvC(2) complex forms which resolves the HJ. It depends on Mg(2+) as a cofactor.

The protein resides in the cytoplasm. The catalysed reaction is Endonucleolytic cleavage at a junction such as a reciprocal single-stranded crossover between two homologous DNA duplexes (Holliday junction).. The RuvA-RuvB-RuvC complex processes Holliday junction (HJ) DNA during genetic recombination and DNA repair. Endonuclease that resolves HJ intermediates. Cleaves cruciform DNA by making single-stranded nicks across the HJ at symmetrical positions within the homologous arms, yielding a 5'-phosphate and a 3'-hydroxyl group; requires a central core of homology in the junction. The consensus cleavage sequence is 5'-(A/T)TT(C/G)-3'. Cleavage occurs on the 3'-side of the TT dinucleotide at the point of strand exchange. HJ branch migration catalyzed by RuvA-RuvB allows RuvC to scan DNA until it finds its consensus sequence, where it cleaves and resolves the cruciform DNA. The chain is Crossover junction endodeoxyribonuclease RuvC from Solidesulfovibrio magneticus (strain ATCC 700980 / DSM 13731 / RS-1) (Desulfovibrio magneticus).